The chain runs to 74 residues: Major structural pilin EpdE (74 aa).

A propeptide spanning residues Met-1 to Gly-12 is cleaved from the precursor. Gln-13 carries the pyrrolidone carboxylic acid modification. The QXSXEXXXL signature appears at Gln-13 to Leu-21.

The N-terminus is cleaved by the prepilin peptidase EppA, which recognizes the class III signal sequence. Post-translationally, N-glycosylated. Glycosylated with an N-linked branched pentasaccharide glycan. May contain glycans at three sites. Glycosylation is AglB-dependent. The N-glycosylation does not occur unless the signal peptide has been cleaved first.

Its subcellular location is the secreted. It is found in the cell surface. It localises to the fimbrium. Functionally, major component of the type IV-like pili. The sequence is that of Major structural pilin EpdE from Methanococcus maripaludis (strain DSM 14266 / JCM 13030 / NBRC 101832 / S2 / LL).